Here is a 535-residue protein sequence, read N- to C-terminus: Calcium-dependent protein kinase 5 (535 aa).

A disordered region spans residues 1–46 (MGNACRGSFGGKTFQGYPQPQDHSESNSNPKHNSDSPKPKKEQQPL). Gly2 carries N-myristoyl glycine lipidation. A lipid anchor (S-palmitoyl cysteine) is attached at Cys5. Basic and acidic residues predominate over residues 32–43 (HNSDSPKPKKEQ). The Protein kinase domain occupies 72–330 (YTLGRKLGQG…AHEVLCHPWI (259 aa)). ATP-binding positions include 78 to 86 (LGQGQFGTT) and Lys101. Asp196 functions as the Proton acceptor in the catalytic mechanism. The tract at residues 336 to 366 (APDRALDPAVLSRLKHFSAMNKLKKMALRVI) is autoinhibitory domain. 4 EF-hand domains span residues 373–408 (EEIA…YGST), 409–444 (LKDI…LNKL), 445–480 (DREE…HNIT), and 484–514 (FEDI…GNPC). Residues Asp386, Asp388, Ser390, Glu397, Asp422, Asp424, Ser426, Thr428, Glu433, Asp458, Asp460, Ser462, Tyr464, Glu469, Asp492, Asp494, Asp496, Arg498, and Glu503 each coordinate Ca(2+).

It belongs to the protein kinase superfamily. Ser/Thr protein kinase family. CDPK subfamily.

It is found in the cell membrane. The enzyme catalyses L-seryl-[protein] + ATP = O-phospho-L-seryl-[protein] + ADP + H(+). It catalyses the reaction L-threonyl-[protein] + ATP = O-phospho-L-threonyl-[protein] + ADP + H(+). Its activity is regulated as follows. Activated by calcium. Autophosphorylation may play an important role in the regulation of the kinase activity. In terms of biological role, regulates the production of reactive oxygen species (ROS) by NADPH oxidase. The chain is Calcium-dependent protein kinase 5 (CPK5) from Solanum tuberosum (Potato).